The chain runs to 533 residues: GDP-fucose protein O-fucosyltransferase 4 (533 aa).

Residues 1–20 are Cytoplasmic-facing; it reads MSAGCTQLVWGGRLHWGASH. Residues 21–37 form a helical; Signal-anchor for type II membrane protein membrane-spanning segment; the sequence is LLSCLLALCALWVLAAA. Topologically, residues 38–533 are lumenal; that stretch reads EPTEGGSANV…ETYIKRSMNH (496 aa). N-linked (GlcNAc...) asparagine glycosylation is found at Asn-148, Asn-206, and Asn-358. Cysteines 429 and 432 form a disulfide. Asn-511 carries N-linked (GlcNAc...) asparagine glycosylation.

It belongs to the glycosyltransferase 10 family.

Its subcellular location is the endoplasmic reticulum membrane. The catalysed reaction is L-threonyl-[protein] + GDP-beta-L-fucose = 3-O-(alpha-L-fucosyl)-L-threonyl-[protein] + GDP + H(+). The enzyme catalyses L-seryl-[protein] + GDP-beta-L-fucose = 3-O-(alpha-L-fucosyl)-L-seryl-[protein] + GDP + H(+). Its pathway is protein modification; protein glycosylation. In terms of biological role, protein O-fucosyltransferase that specifically catalyzes O-fucosylation of serine or threonine residues in EMI domains of target proteins. Attaches fucose through an O-glycosidic linkage. O-fucosylation of EMI domain-containing proteins may be required for facilitating protein folding and secretion. This is GDP-fucose protein O-fucosyltransferase 4 (fut11) from Xenopus tropicalis (Western clawed frog).